A 420-amino-acid polypeptide reads, in one-letter code: MSLLNTPLHELDPDVAAAVDAELDRQQSTLEMIASENFAPVAVMEAQGSVLTNKYAEGYPGRRYYGGCEHVDVVEQIAIDRVKALFGAEHANVQPHSGAQANAAAMFALLKPGDTIMGLNLAHGGHLTHGMKINFSGKLYNVVPYHVGDDGQVDMAEVERLAKETKPKLIVAGWSAYPRQLDFAAFRKVADEVGAYLMVDMAHFAGLVAAGLHPNPVPHAHVVTTTTHKTLGGPRGGVILSTAELAKKINSAVFPGQQGGPLEHVVAAKAVAFKVAASEDFKERQGRTLEGARILAERLVRDDAKAAGVSVLTGGTDVHLVLVDLRDSELDGQQAEDRLHEVGITVNRNAVPNDPRPPMVTSGLRIGTPALATRGFTAEDFAEVADVIAEALKPSYDAEALKARVKTLADKHPLYPGLNK.

(6S)-5,6,7,8-tetrahydrofolate-binding positions include Leu121 and 125-127 (GHL). At Lys229 the chain carries N6-(pyridoxal phosphate)lysine.

The protein belongs to the SHMT family. Homodimer. The cofactor is pyridoxal 5'-phosphate.

It is found in the cytoplasm. The catalysed reaction is (6R)-5,10-methylene-5,6,7,8-tetrahydrofolate + glycine + H2O = (6S)-5,6,7,8-tetrahydrofolate + L-serine. Its pathway is one-carbon metabolism; tetrahydrofolate interconversion. It functions in the pathway amino-acid biosynthesis; glycine biosynthesis; glycine from L-serine: step 1/1. Catalyzes the reversible interconversion of serine and glycine with tetrahydrofolate (THF) serving as the one-carbon carrier. This reaction serves as the major source of one-carbon groups required for the biosynthesis of purines, thymidylate, methionine, and other important biomolecules. Also exhibits THF-independent aldolase activity toward beta-hydroxyamino acids, producing glycine and aldehydes, via a retro-aldol mechanism. The polypeptide is Serine hydroxymethyltransferase (Streptomyces coelicolor (strain ATCC BAA-471 / A3(2) / M145)).